Here is a 249-residue protein sequence, read N- to C-terminus: Ribonuclease 3 (249 aa).

One can recognise an RNase III domain in the interval 20–149; sequence FKEFQERISV…FIGALYLDQG (130 aa). E62 serves as a coordination point for Mg(2+). Residue D66 is part of the active site. Residues D135 and E138 each contribute to the Mg(2+) site. E138 is an active-site residue. A DRBM domain is found at 175 to 244; the sequence is DFKSQLQEFV…AQEALAKMQK (70 aa). The segment at 223–249 is disordered; sequence NGRSKKEAEQHAAQEALAKMQKHHTKQ.

This sequence belongs to the ribonuclease III family. Homodimer. It depends on Mg(2+) as a cofactor.

The protein localises to the cytoplasm. It carries out the reaction Endonucleolytic cleavage to 5'-phosphomonoester.. Its function is as follows. Digests double-stranded RNA. Involved in the processing of primary rRNA transcript to yield the immediate precursors to the large and small rRNAs (23S and 16S). Processes some mRNAs, and tRNAs when they are encoded in the rRNA operon. Processes pre-crRNA and tracrRNA of type II CRISPR loci if present in the organism. The polypeptide is Ribonuclease 3 (Bacillus velezensis (strain DSM 23117 / BGSC 10A6 / LMG 26770 / FZB42) (Bacillus amyloliquefaciens subsp. plantarum)).